The primary structure comprises 123 residues: Large ribosomal subunit protein bL12 (123 aa).

The protein belongs to the bacterial ribosomal protein bL12 family. As to quaternary structure, homodimer. Part of the ribosomal stalk of the 50S ribosomal subunit. Forms a multimeric L10(L12)X complex, where L10 forms an elongated spine to which 2 to 4 L12 dimers bind in a sequential fashion. Binds GTP-bound translation factors.

Forms part of the ribosomal stalk which helps the ribosome interact with GTP-bound translation factors. Is thus essential for accurate translation. The protein is Large ribosomal subunit protein bL12 of Desulfotalea psychrophila (strain LSv54 / DSM 12343).